The following is a 413-amino-acid chain: 5'-deoxyadenosine deaminase (413 aa).

The Zn(2+) site is built by histidine 57 and histidine 59. Substrate is bound by residues glutamate 86 and histidine 171. Histidine 198 is a binding site for Zn(2+). Residues glutamate 201 and aspartate 286 each contribute to the substrate site. Aspartate 286 serves as a coordination point for Zn(2+).

This sequence belongs to the metallo-dependent hydrolases superfamily. MTA/SAH deaminase family. As to quaternary structure, homotetramer. Requires Zn(2+) as cofactor.

It catalyses the reaction 5'-deoxyadenosine + H2O + H(+) = 5'-deoxyinosine + NH4(+). The enzyme catalyses S-adenosyl-L-homocysteine + H2O + H(+) = S-inosyl-L-homocysteine + NH4(+). It carries out the reaction S-methyl-5'-thioadenosine + H2O + H(+) = S-methyl-5'-thioinosine + NH4(+). The catalysed reaction is adenosine + H2O + H(+) = inosine + NH4(+). Its pathway is amino-acid biosynthesis; S-adenosyl-L-methionine biosynthesis. Catalyzes the deamination of three SAM-derived enzymatic products, namely 5'-deoxyadenosine, S-adenosyl-L-homocysteine, and 5'-methylthioadenosine, to produce the inosine analogs. Can also deaminate adenosine. The preferred substrate for this enzyme is 5'-deoxyadenosine, but all these substrates are efficiently deaminated. Likely functions in a S-adenosyl-L-methionine (SAM) recycling pathway from S-adenosyl-L-homocysteine (SAH) produced from SAM-dependent methylation reactions. May also be involved in the recycling of 5'-deoxyadenosine, whereupon the 5'-deoxyribose moiety of 5'-deoxyinosine is further metabolized to deoxyhexoses used for the biosynthesis of aromatic amino acids in methanogens. This Methanothrix thermoacetophila (strain DSM 6194 / JCM 14653 / NBRC 101360 / PT) (Methanosaeta thermophila) protein is 5'-deoxyadenosine deaminase.